We begin with the raw amino-acid sequence, 292 residues long: uncharacterized protein (292 aa).

A helical transmembrane segment spans residues 175–197; sequence VLNFYFTALPYAIDGIISGIGVF.

It localises to the membrane. This is an uncharacterized protein from Methanocaldococcus jannaschii (strain ATCC 43067 / DSM 2661 / JAL-1 / JCM 10045 / NBRC 100440) (Methanococcus jannaschii).